Here is a 156-residue protein sequence, read N- to C-terminus: ATP synthase subunit b (156 aa).

The helical transmembrane segment at 7–27 (LIVQMLVFVVFIGLTMKFIWP) threads the bilayer.

The protein belongs to the ATPase B chain family. As to quaternary structure, F-type ATPases have 2 components, F(1) - the catalytic core - and F(0) - the membrane proton channel. F(1) has five subunits: alpha(3), beta(3), gamma(1), delta(1), epsilon(1). F(0) has three main subunits: a(1), b(2) and c(10-14). The alpha and beta chains form an alternating ring which encloses part of the gamma chain. F(1) is attached to F(0) by a central stalk formed by the gamma and epsilon chains, while a peripheral stalk is formed by the delta and b chains.

It localises to the cell inner membrane. In terms of biological role, f(1)F(0) ATP synthase produces ATP from ADP in the presence of a proton or sodium gradient. F-type ATPases consist of two structural domains, F(1) containing the extramembraneous catalytic core and F(0) containing the membrane proton channel, linked together by a central stalk and a peripheral stalk. During catalysis, ATP synthesis in the catalytic domain of F(1) is coupled via a rotary mechanism of the central stalk subunits to proton translocation. Functionally, component of the F(0) channel, it forms part of the peripheral stalk, linking F(1) to F(0). This Coxiella burnetii (strain CbuK_Q154) (Coxiella burnetii (strain Q154)) protein is ATP synthase subunit b.